The sequence spans 207 residues: Ribosomal RNA small subunit methyltransferase G (207 aa).

S-adenosyl-L-methionine contacts are provided by residues G74, L79, 125–126 (VE), and R140.

This sequence belongs to the methyltransferase superfamily. RNA methyltransferase RsmG family.

It is found in the cytoplasm. It catalyses the reaction guanosine(527) in 16S rRNA + S-adenosyl-L-methionine = N(7)-methylguanosine(527) in 16S rRNA + S-adenosyl-L-homocysteine. Functionally, specifically methylates the N7 position of guanine in position 527 of 16S rRNA. This chain is Ribosomal RNA small subunit methyltransferase G, found in Shewanella piezotolerans (strain WP3 / JCM 13877).